A 120-amino-acid polypeptide reads, in one-letter code: Chaperonin GroEL (120 aa).

Aspartate 23–threonine 27 contributes to the ATP binding site.

The protein belongs to the chaperonin (HSP60) family. As to quaternary structure, forms a cylinder of 14 subunits composed of two heptameric rings stacked back-to-back. Interacts with the co-chaperonin GroES.

It localises to the cytoplasm. It carries out the reaction ATP + H2O + a folded polypeptide = ADP + phosphate + an unfolded polypeptide.. In terms of biological role, together with its co-chaperonin GroES, plays an essential role in assisting protein folding. The GroEL-GroES system forms a nano-cage that allows encapsulation of the non-native substrate proteins and provides a physical environment optimized to promote and accelerate protein folding. The polypeptide is Chaperonin GroEL (Mycobacterium xenopi).